The primary structure comprises 196 residues: MLQELLKNHEIILASGSPRRQKFFQDLEIPVKIDVRPVDEVFSEHLKKEEITDFLSVLKSEVFLNDLKENQILITSDTIVYNEAKALGKPKDHAEAVKMISSLSGKNHEVITSVCFTSKNYQKVLNHSTRVYFSELTEKEIEYYVTNFKPFDKAGGYAIQEWIGLIGIKKIEGSYFNVVGLPTHEVYKTLKEMLNS.

Aspartate 77 acts as the Proton acceptor in catalysis.

This sequence belongs to the Maf family. YhdE subfamily. A divalent metal cation is required as a cofactor.

Its subcellular location is the cytoplasm. The catalysed reaction is dTTP + H2O = dTMP + diphosphate + H(+). The enzyme catalyses UTP + H2O = UMP + diphosphate + H(+). In terms of biological role, nucleoside triphosphate pyrophosphatase that hydrolyzes dTTP and UTP. May have a dual role in cell division arrest and in preventing the incorporation of modified nucleotides into cellular nucleic acids. The protein is dTTP/UTP pyrophosphatase of Christiangramia forsetii (strain DSM 17595 / CGMCC 1.15422 / KT0803) (Gramella forsetii).